A 351-amino-acid polypeptide reads, in one-letter code: DNA polymerase IV (351 aa).

Residues 4–185 (IIHVDMDCFF…LPLAKIPGVG (182 aa)) form the UmuC domain. Mg(2+) contacts are provided by D8 and D103. The active site involves E104.

It belongs to the DNA polymerase type-Y family. Monomer. Requires Mg(2+) as cofactor.

It is found in the cytoplasm. The enzyme catalyses DNA(n) + a 2'-deoxyribonucleoside 5'-triphosphate = DNA(n+1) + diphosphate. In terms of biological role, poorly processive, error-prone DNA polymerase involved in untargeted mutagenesis. Copies undamaged DNA at stalled replication forks, which arise in vivo from mismatched or misaligned primer ends. These misaligned primers can be extended by PolIV. Exhibits no 3'-5' exonuclease (proofreading) activity. May be involved in translesional synthesis, in conjunction with the beta clamp from PolIII. The sequence is that of DNA polymerase IV from Shigella dysenteriae serotype 1 (strain Sd197).